Here is a 211-residue protein sequence, read N- to C-terminus: HTH-type transcriptional regulator AlkX (211 aa).

Residues 22 to 82 form the HTH tetR-type domain; it reads ALLRDSVLDA…GYALRLADRL (61 aa). Positions 45–64 form a DNA-binding region, H-T-H motif; that stretch reads TLSDVARAAGISRQTIYNEF.

Homodimer.

It localises to the cytoplasm. DNA-binding activity may be regulated by fatty acids. Represses the expression of the alkB-rubAB operon, which encodes the alkane hydroxylase AlkB and the rubredoxins RubA and RubB. Acts by binding to the promoter region of the operon. In addition, EMSA analysis show that AlkX can bind to the promoter region of mmpS1 and mmpL3 and to the intragenic region of mmpL11, suggesting that it may participate in the regulatory network that controls the expression of MmpL lipid transporters. This is HTH-type transcriptional regulator AlkX from Mycobacterium tuberculosis (strain ATCC 25618 / H37Rv).